Consider the following 223-residue polypeptide: Cytidylate kinase (223 aa).

ATP is bound at residue 10-18; that stretch reads GPASSGKST.

Belongs to the cytidylate kinase family. Type 1 subfamily.

It localises to the cytoplasm. It carries out the reaction CMP + ATP = CDP + ADP. The catalysed reaction is dCMP + ATP = dCDP + ADP. This is Cytidylate kinase from Streptococcus pneumoniae (strain Taiwan19F-14).